The sequence spans 571 residues: Leucine aminopeptidase A2, chloroplastic (571 aa).

The transit peptide at 1-42 (MATLRVSSLFASSSSSLHSNPSVFTKYQSSPKWAFSFPVTPL) directs the protein to the chloroplast. 2 residues coordinate Mg(2+): lysine 342 and aspartate 347. Lysine 354 is a catalytic residue. Positions 367, 427, and 429 each coordinate Mg(2+). Arginine 431 is an active-site residue.

This sequence belongs to the peptidase M17 family. In terms of assembly, homohexamer (dimer of homotrimers). The cofactor is Mg(2+). As to expression, expressed during floral development. Expressed in healthy and senescent leaves, cotyledons (emergence from seed coats), pistils, sepals, petals, stamens, and floral buds (at protein level).

The protein resides in the plastid. It is found in the chloroplast. It carries out the reaction Release of an N-terminal amino acid, Xaa-|-Yaa-, in which Xaa is preferably Leu, but may be other amino acids including Pro although not Arg or Lys, and Yaa may be Pro. Amino acid amides and methyl esters are also readily hydrolyzed, but rates on arylamides are exceedingly low.. The catalysed reaction is Release of N-terminal proline from a peptide.. In terms of biological role, catalyzes the removal of unsubstituted N-terminal amino acids from various peptides. When associated as homohexamer, catalyzes the proteolyzes of Xaa-Leu dipeptides. Possesses leucine aminopeptidase activity against the model substrate leucine-amido methyl coumarin. Presumably involved in the processing and regular turnover of intracellular proteins. Regulates wound signaling and has a role in insect defense. Its function is as follows. Functions as a molecular chaperone to protect proteins from heat-induced damage. The polypeptide is Leucine aminopeptidase A2, chloroplastic (Solanum lycopersicum (Tomato)).